We begin with the raw amino-acid sequence, 421 residues long: Outer capsid protein P8 (421 aa).

This sequence belongs to the phytoreovirus outer capsid protein P8 family. Homotrimer. Homomultimer. Interacts with host peroxisomal glycolate oxidase (GOX). This interaction mediates its relocation to virus factories peripheral to host peroxisomes.

Its subcellular location is the virion. The protein resides in the host cytoplasm. Functionally, capsid protein which self-assembles to form the outer icosahedral capsid with a T=13 symmetry, about 70 nm in diameter and consisting of 780 molecules capsid proteins. This is Outer capsid protein P8 from Alopecurus aequalis (Barnyard grass).